We begin with the raw amino-acid sequence, 184 residues long: Endoribonuclease YbeY (184 aa).

2 stretches are compositionally biased toward acidic residues: residues Met-1–Pro-11 and Asp-19–Asp-29. The interval Met-1–Leu-37 is disordered. Positions 146, 150, and 156 each coordinate Zn(2+).

It belongs to the endoribonuclease YbeY family. Zn(2+) serves as cofactor.

The protein resides in the cytoplasm. Its function is as follows. Single strand-specific metallo-endoribonuclease involved in late-stage 70S ribosome quality control and in maturation of the 3' terminus of the 16S rRNA. The polypeptide is Endoribonuclease YbeY (Burkholderia mallei (strain ATCC 23344)).